Consider the following 616-residue polypeptide: Elongation factor 4 (616 aa).

Residues 17 to 203 (ERIRNFCIIA…RVCELVPAPV (187 aa)) form the tr-type G domain. GTP contacts are provided by residues 29-34 (DHGKST) and 150-153 (NKID).

It belongs to the TRAFAC class translation factor GTPase superfamily. Classic translation factor GTPase family. LepA subfamily.

It is found in the cell membrane. It catalyses the reaction GTP + H2O = GDP + phosphate + H(+). Required for accurate and efficient protein synthesis under certain stress conditions. May act as a fidelity factor of the translation reaction, by catalyzing a one-codon backward translocation of tRNAs on improperly translocated ribosomes. Back-translocation proceeds from a post-translocation (POST) complex to a pre-translocation (PRE) complex, thus giving elongation factor G a second chance to translocate the tRNAs correctly. Binds to ribosomes in a GTP-dependent manner. The sequence is that of Elongation factor 4 from Corynebacterium jeikeium (strain K411).